The chain runs to 319 residues: MSRIVTYSPAYTIVPTYECFNNCSYCNFRSDPGKSSWLSLSEAEKQLLSLKNKGTIEILTLSGEVHPNSKYRKAWFQLIYKLCQLALSLGFLPHTNVGILTRSEMEELKQVNVSMGLMLEQITPKLLKIVHKNSPSKIPHLRLQQLEWAGELRIPFTTGLLLGIGETVTDWKDTLEAISNIHQKWGHIQEVIIQPYSPGSENKWVSDGFNVNLLPEVIAIANEVLPSNITLQIPPNLVKKPEILLACLENGARDLGGIGPFDEINPDYPHPHYQALIKVLESRGWQLTKRLPVYSKYDDWLPINLKNIVSEWRIKLSIY.

The Radical SAM core domain occupies 5 to 236 (VTYSPAYTIV…SNITLQIPPN (232 aa)). [4Fe-4S] cluster contacts are provided by Cys19, Cys23, and Cys26.

Belongs to the radical SAM superfamily. CofG family. In terms of assembly, consists of two subunits, CofG and CofH. [4Fe-4S] cluster serves as cofactor.

It catalyses the reaction 5-amino-5-(4-hydroxybenzyl)-6-(D-ribitylimino)-5,6-dihydrouracil + S-adenosyl-L-methionine = 7,8-didemethyl-8-hydroxy-5-deazariboflavin + 5'-deoxyadenosine + L-methionine + NH4(+) + H(+). It participates in cofactor biosynthesis; coenzyme F0 biosynthesis. In terms of biological role, catalyzes the radical-mediated synthesis of 7,8-didemethyl-8-hydroxy-5-deazariboflavin from 5-amino-5-(4-hydroxybenzyl)-6-(D-ribitylimino)-5,6-dihydrouracil. This is 7,8-didemethyl-8-hydroxy-5-deazariboflavin synthase from Trichodesmium erythraeum (strain IMS101).